The following is a 206-amino-acid chain: Molybdopterin synthase catalytic subunit (206 aa).

Residues 1 to 23 (MATQQPTQTDNSAQAQPPQTNPA) show a composition bias toward polar residues. A disordered region spans residues 1 to 27 (MATQQPTQTDNSAQAQPPQTNPAKPTE). Substrate contacts are provided by residues 131 to 132 (HR), Lys147, and 154 to 156 (KRE). Positions 177–188 (KVDEPRIGKGEV) are enriched in basic and acidic residues. Residues 177-206 (KVDEPRIGKGEVDEKEDEGDSGNGGNDRKS) are disordered. The segment covering 197-206 (SGNGGNDRKS) has biased composition (gly residues).

It belongs to the MoaE family. MOCS2B subfamily. Heterotetramer; composed of 2 small (MOCS2A) and 2 large (MOCS2B) subunits.

It localises to the cytoplasm. The catalysed reaction is 2 [molybdopterin-synthase sulfur-carrier protein]-C-terminal-Gly-aminoethanethioate + cyclic pyranopterin phosphate + H2O = molybdopterin + 2 [molybdopterin-synthase sulfur-carrier protein]-C-terminal Gly-Gly + 2 H(+). Its pathway is cofactor biosynthesis; molybdopterin biosynthesis. Functionally, catalytic subunit of the molybdopterin synthase complex, a complex that catalyzes the conversion of precursor Z into molybdopterin. Acts by mediating the incorporation of 2 sulfur atoms from thiocarboxylated MOCS2A into precursor Z to generate a dithiolene group. This is Molybdopterin synthase catalytic subunit (nit-8) from Neurospora crassa (strain ATCC 24698 / 74-OR23-1A / CBS 708.71 / DSM 1257 / FGSC 987).